We begin with the raw amino-acid sequence, 446 residues long: Exodeoxyribonuclease 7 large subunit (446 aa).

The protein belongs to the XseA family. Heterooligomer composed of large and small subunits.

It localises to the cytoplasm. It catalyses the reaction Exonucleolytic cleavage in either 5'- to 3'- or 3'- to 5'-direction to yield nucleoside 5'-phosphates.. In terms of biological role, bidirectionally degrades single-stranded DNA into large acid-insoluble oligonucleotides, which are then degraded further into small acid-soluble oligonucleotides. This chain is Exodeoxyribonuclease 7 large subunit, found in Geotalea uraniireducens (strain Rf4) (Geobacter uraniireducens).